The primary structure comprises 195 residues: PAP fimbrial minor pilin protein (195 aa).

Positions 1-22 (MRLRFSVPLFFFGCVFVHGVFA) are cleaved as a signal peptide. Residues cysteine 58 and cysteine 97 are joined by a disulfide bond.

This sequence belongs to the fimbrial protein family.

The protein localises to the secreted. Its subcellular location is the fimbrium. Fimbriae (also called pili), polar filaments radiating from the surface of the bacterium to a length of 0.5-1.5 micrometers and numbering 100-300 per cell, enable bacteria to colonize the epithelium of specific host organs. In terms of biological role, papH seems to anchor the pilus to the bacterial cell. In addition the stoichiometric relationship between PapH and PapA determines the pilus length. The protein is PAP fimbrial minor pilin protein (papH) of Escherichia coli.